The following is a 178-amino-acid chain: Ribosome maturation factor RimM (178 aa).

The PRC barrel domain maps to 101 to 178 (ADEYYWYQLE…VMRVEWDADF (78 aa)).

The protein belongs to the RimM family. In terms of assembly, binds ribosomal protein uS19.

The protein localises to the cytoplasm. Its function is as follows. An accessory protein needed during the final step in the assembly of 30S ribosomal subunit, possibly for assembly of the head region. Essential for efficient processing of 16S rRNA. May be needed both before and after RbfA during the maturation of 16S rRNA. It has affinity for free ribosomal 30S subunits but not for 70S ribosomes. In Pseudomonas fluorescens (strain Pf0-1), this protein is Ribosome maturation factor RimM.